A 334-amino-acid polypeptide reads, in one-letter code: Protein FAM50B (334 aa).

Residue alanine 2 is modified to N-acetylalanine. Residues 122–175 (FTLDEEEGDQEDSRQAESAEAHSAGAKKNLGKNPDVDTSFLPDREREEEENRLR) form a disordered region. Basic and acidic residues-rich tracts occupy residues 132–141 (EDSRQAESAE) and 163–175 (PDRE…NRLR).

It belongs to the FAM50 family. Widely expressed. Abundant in testis, where it is expressed in seminiferous tubules, not in the interstitium. At the cellular level, expressed in primary spermatocytes and round spermatids, but not detectable in spermatogonia, elongating spermatids, mature spermatozoa, Sertoli cells or Leydig cells.

The protein is Protein FAM50B (Fam50b) of Mus musculus (Mouse).